The sequence spans 431 residues: Glucose-1-phosphate adenylyltransferase (431 aa).

Lysine 39 lines the beta-D-fructose 1,6-bisphosphate pocket. The AMP site is built by arginine 40, histidine 46, and arginine 52. Alpha-D-glucose 1-phosphate is bound at residue tyrosine 114. Arginine 130 is an AMP binding site. Residues glycine 179, 194–195 (EK), and serine 212 each bind alpha-D-glucose 1-phosphate. Residues glutamate 370 and arginine 386 each coordinate AMP. Residues 419–423 (REMLR) and 429–431 (QER) contribute to the beta-D-fructose 1,6-bisphosphate site.

This sequence belongs to the bacterial/plant glucose-1-phosphate adenylyltransferase family. As to quaternary structure, homotetramer.

It carries out the reaction alpha-D-glucose 1-phosphate + ATP + H(+) = ADP-alpha-D-glucose + diphosphate. It participates in glycan biosynthesis; glycogen biosynthesis. Its activity is regulated as follows. Allosterically activated by fructose-1,6-bisphosphate (F16BP) and inhibited by AMP. Its function is as follows. Involved in the biosynthesis of ADP-glucose, a building block required for the elongation reactions to produce glycogen. Catalyzes the reaction between ATP and alpha-D-glucose 1-phosphate (G1P) to produce pyrophosphate and ADP-Glc. The sequence is that of Glucose-1-phosphate adenylyltransferase from Salmonella dublin (strain CT_02021853).